The following is a 292-amino-acid chain: High-affinity heme uptake system protein IsdE (292 aa).

An N-terminal signal peptide occupies residues 1–19 (MRIIKYLTILVISVVILTS). The N-palmitoyl cysteine moiety is linked to residue Cys20. Residue Cys20 is the site of S-diacylglycerol cysteine attachment. In terms of domain architecture, Fe/B12 periplasmic-binding spans 35 to 291 (RIVPTTVALT…QLYDLFYKDK (257 aa)). Positions 41, 42, 60, 61, 78, and 229 each coordinate heme.

The protein belongs to the bacterial solute-binding protein 8 family. Heme b is required as a cofactor.

It localises to the cell membrane. Functionally, involved in heme (porphyrin) scavenging. Binds Fe(2+) and Fe(3+) heme but the largest fraction is Fe(2+) heme. Functions as a high-affinity heme binding protein and probably has a role in relaying heme-iron from cell wall-anchored isd proteins receptors to the probable permease IsdF. This chain is High-affinity heme uptake system protein IsdE (isdE), found in Staphylococcus aureus (strain bovine RF122 / ET3-1).